Reading from the N-terminus, the 156-residue chain is Large ribosomal subunit protein eL24 (156 aa).

The span at Arg-110–Lys-123 shows a compositional bias: basic and acidic residues. The tract at residues Arg-110–Arg-156 is disordered.

The protein belongs to the eukaryotic ribosomal protein eL24 family.

This chain is Large ribosomal subunit protein eL24 (RPL24), found in Schistosoma japonicum (Blood fluke).